The primary structure comprises 57 residues: Weak toxin CM-1b (57 aa).

Cystine bridges form between cysteine 3–cysteine 19, cysteine 12–cysteine 37, cysteine 40–cysteine 49, and cysteine 50–cysteine 55.

Belongs to the three-finger toxin family. Short-chain subfamily. Orphan group XX sub-subfamily. As to expression, expressed by the venom gland.

The protein resides in the secreted. This Hemachatus haemachatus (Rinkhals) protein is Weak toxin CM-1b.